Reading from the N-terminus, the 856-residue chain is Translation initiation factor IF-2 (856 aa).

Disordered regions lie at residues 1-248 (MSDN…ARAR) and 254-273 (KRAREKDKRAHQAGTVQQKQ). A compositionally biased stretch (polar residues) spans 22 to 38 (ETGQVKQSFSHGRSNTV). The segment covering 83–93 (APRPAPAPIPT) has biased composition (pro residues). Residues 100–150 (LERREQQERLLREAEEARMAALEETRRREERAKAEATEEERRRAEENRRAE) show a composition bias toward basic and acidic residues. Residues 156–196 (AAAAAAAAATAEAETAAAAPREEAPAAAGTAEEAPRTSSST) show a composition bias toward low complexity. The span at 197–209 (MPPPRRFTPVPSP) shows a compositional bias: pro residues. A compositionally biased stretch (basic and acidic residues) spans 210–229 (KRPEPPRPQQRDRKGDDRRQ). Positions 356-526 (PRPPVVTIMG…ELQAELLELK (171 aa)) constitute a tr-type G domain. The interval 365 to 372 (GHVDHGKT) is G1. A GTP-binding site is contributed by 365–372 (GHVDHGKT). The tract at residues 390–394 (GITQH) is G2. The G3 stretch occupies residues 412–415 (DTPG). GTP-binding positions include 412-416 (DTPGH) and 466-469 (NKMD). Residues 466–469 (NKMD) are G4. The interval 502–504 (SAL) is G5.

It belongs to the TRAFAC class translation factor GTPase superfamily. Classic translation factor GTPase family. IF-2 subfamily.

It is found in the cytoplasm. Its function is as follows. One of the essential components for the initiation of protein synthesis. Protects formylmethionyl-tRNA from spontaneous hydrolysis and promotes its binding to the 30S ribosomal subunits. Also involved in the hydrolysis of GTP during the formation of the 70S ribosomal complex. The chain is Translation initiation factor IF-2 from Rhizorhabdus wittichii (strain DSM 6014 / CCUG 31198 / JCM 15750 / NBRC 105917 / EY 4224 / RW1) (Sphingomonas wittichii).